The sequence spans 440 residues: Glutamate-1-semialdehyde 2,1-aminomutase (440 aa).

The residue at position 273 (K273) is an N6-(pyridoxal phosphate)lysine.

The protein belongs to the class-III pyridoxal-phosphate-dependent aminotransferase family. HemL subfamily. In terms of assembly, homodimer. The cofactor is pyridoxal 5'-phosphate.

The protein localises to the cytoplasm. It catalyses the reaction (S)-4-amino-5-oxopentanoate = 5-aminolevulinate. Its pathway is porphyrin-containing compound metabolism; protoporphyrin-IX biosynthesis; 5-aminolevulinate from L-glutamyl-tRNA(Glu): step 2/2. The protein is Glutamate-1-semialdehyde 2,1-aminomutase of Alkaliphilus metalliredigens (strain QYMF).